A 287-amino-acid polypeptide reads, in one-letter code: 4-diphosphocytidyl-2-C-methyl-D-erythritol kinase (287 aa).

Residue K14 is part of the active site. An ATP-binding site is contributed by 96-106 (PWGAGLGGGSS). D138 is an active-site residue.

The protein belongs to the GHMP kinase family. IspE subfamily.

The catalysed reaction is 4-CDP-2-C-methyl-D-erythritol + ATP = 4-CDP-2-C-methyl-D-erythritol 2-phosphate + ADP + H(+). It functions in the pathway isoprenoid biosynthesis; isopentenyl diphosphate biosynthesis via DXP pathway; isopentenyl diphosphate from 1-deoxy-D-xylulose 5-phosphate: step 3/6. Catalyzes the phosphorylation of the position 2 hydroxy group of 4-diphosphocytidyl-2C-methyl-D-erythritol. The polypeptide is 4-diphosphocytidyl-2-C-methyl-D-erythritol kinase (Methylibium petroleiphilum (strain ATCC BAA-1232 / LMG 22953 / PM1)).